We begin with the raw amino-acid sequence, 392 residues long: Stilbene synthase 1 (392 aa).

A substrate-binding site is contributed by 55–58 (KFNR). Cys164 is a catalytic residue. Residues Leu267 and 305–307 (GGP) each bind substrate.

It belongs to the thiolase-like superfamily. Chalcone/stilbene synthases family. Homodimer. In leaves, expressed in palisade and spongy parenchyma cells and, to a lesser extent, in epidermal cells after induction.

It is found in the cytoplasm. The enzyme catalyses 4-coumaroyl-CoA + 3 malonyl-CoA + 3 H(+) = trans-resveratrol + 4 CO2 + 4 CoA. Its pathway is phytoalexin biosynthesis; 3,4',5-trihydroxystilbene biosynthesis; 3,4',5-trihydroxystilbene from trans-4-coumarate: step 2/2. In terms of biological role, mediates resistance to pathogens which are sensitive to stilbenes such as Botrytis cinerea, Eutypa lata and Plasmopora viticola by enhancing the production of phytoalexins. Confers resistance to Phytophthora palmivora when expressed in papaya. In Vitis vinifera (Grape), this protein is Stilbene synthase 1 (VINST1).